A 151-amino-acid chain; its full sequence is Probable cGMP 3',5'-cyclic phosphodiesterase subunit delta (151 aa).

It belongs to the PDE6D/unc-119 family. In terms of assembly, interacts with Pde6.

It localises to the nucleus. The protein localises to the cytoplasm. The chain is Probable cGMP 3',5'-cyclic phosphodiesterase subunit delta from Drosophila sechellia (Fruit fly).